The primary structure comprises 169 residues: Large ribosomal subunit protein uL15 (169 aa).

Basic and acidic residues predominate over residues 1–13; that stretch reads MKLNEIRDNEGAT. Positions 1 to 40 are disordered; it reads MKLNEIRDNEGATKNRMRVGRGIGSGKGKTGGRGVKGQKA. Positions 21 to 35 are enriched in gly residues; that stretch reads RGIGSGKGKTGGRGV.

This sequence belongs to the universal ribosomal protein uL15 family. Part of the 50S ribosomal subunit.

In terms of biological role, binds to the 23S rRNA. The sequence is that of Large ribosomal subunit protein uL15 from Methylorubrum populi (strain ATCC BAA-705 / NCIMB 13946 / BJ001) (Methylobacterium populi).